The following is a 530-amino-acid chain: Chaperonin GroEL, chloroplastic (530 aa).

Residues 29–32, 86–90, glycine 414, 480–482, and aspartate 496 contribute to the ATP site; these read TLGP, DGTTT, and DAL.

It belongs to the chaperonin (HSP60) family. As to quaternary structure, forms a cylinder of 14 subunits composed of two heptameric rings stacked back-to-back. Interacts with the co-chaperonin GroES.

It localises to the plastid. It is found in the chloroplast. The enzyme catalyses ATP + H2O + a folded polypeptide = ADP + phosphate + an unfolded polypeptide.. In terms of biological role, together with its co-chaperonin GroES, plays an essential role in assisting protein folding. The GroEL-GroES system forms a nano-cage that allows encapsulation of the non-native substrate proteins and provides a physical environment optimized to promote and accelerate protein folding. This Cyanidium caldarium (Red alga) protein is Chaperonin GroEL, chloroplastic.